Reading from the N-terminus, the 1336-residue chain is Lysine-specific demethylase 2B (1336 aa).

Positions 1-25 are disordered; it reads MAGPQMGGSAEDHPPRKRHAAEKQK. The segment covering 15 to 25 has biased composition (basic residues); the sequence is PRKRHAAEKQK. The residue at position 57 (Ser-57) is a Phosphoserine. The region spanning 178–346 is the JmjC domain; it reads FSHTKLEHLV…MQLRIYEIED (169 aa). Thr-239 contributes to the substrate binding site. Residues His-242 and Asp-244 each contribute to the Fe cation site. Lys-259 is a binding site for substrate. A Fe cation-binding site is contributed by His-314. Over residues 410–430 the composition is skewed to acidic residues; that stretch reads MEEEACDQQPQEEEEKDEEGE. The disordered stretch occupies residues 410–465; it reads MEEEACDQQPQEEEEKDEEGEGRDRAPKPPTDGSTSPTSTPSEDQEALGKKPKAPA. Low complexity predominate over residues 440–451; that stretch reads TDGSTSPTSTPS. Ser-474 and Ser-477 each carry phosphoserine. Phosphothreonine is present on Thr-493. Position 497 is a phosphoserine (Ser-497). The CXXC-type zinc finger occupies 606-652; sequence ARRRRTRCRKCEACLRTECGECHFCKDMKKFGGPGRMKQSCIMRQCI. The Zn(2+) site is built by Cys-613, Cys-616, Cys-619, Cys-624, Cys-627, Cys-630, Cys-646, Cys-651, Cys-662, Cys-665, Cys-688, Cys-691, His-696, Cys-699, Cys-719, and Cys-722. Residues 659-725 form a PHD-type zinc finger; sequence TAVCLVCGEA…CWECPKCNHA (67 aa). 2 disordered regions span residues 727-843 and 855-1034; these read KTGK…SLSP and QLKP…SPPK. Basic and acidic residues predominate over residues 749-799; sequence KEQKMNRDNKEGQEPAKRRSECEEAPRRRSDEHSKKVPPDGLLRRKSDDVH. The span at 819–843 shows a compositional bias: low complexity; the sequence is SSLQTSPGSSSHLSPRPPLGSSLSP. Glycyl lysine isopeptide (Lys-Gly) (interchain with G-Cter in SUMO2) cross-links involve residues Lys-857 and Lys-890. Positions 902–911 are enriched in basic and acidic residues; the sequence is PKTRESDHSR. Residues 932 to 941 show a composition bias toward basic residues; it reads KVKMRRKRRL. Residues 942 to 960 are compositionally biased toward basic and acidic residues; that stretch reads PNKELSRELSKELNHEIQR. A coiled-coil region spans residues 943–971; the sequence is NKELSRELSKELNHEIQRTENSLANENQQ. At Ser-951 the chain carries Phosphoserine. The span at 961 to 971 shows a compositional bias: polar residues; that stretch reads TENSLANENQQ. A phosphoserine mark is found at Ser-975, Ser-979, Ser-1018, and Ser-1031. Positions 1014 to 1024 are enriched in low complexity; the sequence is PSLRSPPRVIS. Positions 1059 to 1105 constitute an F-box domain; it reads DGAAHVMHREVWMAVFSYLSHQDLCVCMRVCRTWNRWCCDKRLWTRI. LRR repeat units follow at residues 1093–1120, 1133–1154, 1156–1182, 1222–1247, 1248–1277, 1278–1302, and 1303–1336; these read NRWCCDKRLWTRIDLNHCKSITPLMLSG, WTNISKKQLSWLINRLPGLRDL, LSGCSWIAVSALCSSSCPLLRTLDVQW, GLDITDASLRLIIRHMPLLSKLHLSY, CNHVTDQSINLLTAVGTTTRDSLTEINLSD, CNKVTDQCLSFFKRCGNICHIDLRY, and CKQVTKEGCEQFIAEMSVSVQFGQVEEKLLQKLS.

It belongs to the JHDM1 histone demethylase family. In terms of assembly, interacts with SKP1, forming heterodimers. The heterodimeric KDM2B-SKP1 complex interacts with the PCGF1-BCORL1 heterodimeric complex to form a homotetrameric polycomb repression complex 1 (PRC1.1). Directly interacts with CUL1. The SKP1-KDM2B complex interacts with UBB. The cofactor is Fe(2+).

It localises to the nucleus. The protein resides in the nucleolus. It is found in the chromosome. The enzyme catalyses N(6),N(6)-dimethyl-L-lysyl(36)-[histone H3] + 2 2-oxoglutarate + 2 O2 = L-lysyl(36)-[histone H3] + 2 formaldehyde + 2 succinate + 2 CO2. With respect to regulation, histone demethylase activity is inhibited by fumarate. Histone demethylase that demethylates 'Lys-4' and 'Lys-36' of histone H3, thereby playing a central role in histone code. Preferentially demethylates trimethylated H3 'Lys-4' and dimethylated H3 'Lys-36' residue while it has weak or no activity for mono- and tri-methylated H3 'Lys-36'. Preferentially binds the transcribed region of ribosomal RNA and represses the transcription of ribosomal RNA genes which inhibits cell growth and proliferation. May also serve as a substrate-recognition component of the SCF (SKP1-CUL1-F-box protein)-type E3 ubiquitin ligase complex. This is Lysine-specific demethylase 2B (KDM2B) from Homo sapiens (Human).